A 579-amino-acid polypeptide reads, in one-letter code: Matrix metalloproteinase-C (579 aa).

Positions Met-1–Ala-17 are cleaved as a signal peptide. The propeptide at Gly-18–Leu-129 is activation peptide. A disordered region spans residues Asn-32–Ser-51. Residues Ser-33–Pro-50 show a composition bias toward low complexity. A Cysteine switch motif is present at residues Ser-120–Ala-127. Residues Cys-122, His-200, Asp-202, His-215, and His-225 each coordinate Zn(2+). Residue Asn-231 is glycosylated (N-linked (GlcNAc...) asparagine). Residue His-254 coordinates Zn(2+). Residue Glu-255 is part of the active site. The Zn(2+) site is built by His-258 and His-264. Positions Ser-307–Cys-394 are disordered. A compositionally biased stretch (gly residues) spans Asp-315 to Ser-324. Positions Arg-325–Phe-341 are enriched in low complexity. A compositionally biased stretch (gly residues) spans Trp-373–Cys-394. Hemopexin repeat units lie at residues Pro-395–Ala-437 and Pro-438–Ser-490.

This sequence belongs to the peptidase M10A family. Zn(2+) serves as cofactor.

Its subcellular location is the secreted. It is found in the extracellular space. The protein resides in the extracellular matrix. With respect to regulation, inhibited by human TIMP1 and TIMP2 and the broad MMP inhibitors BB94 (Batimastat) and CT543. Functionally, metalloproteinase. The polypeptide is Matrix metalloproteinase-C (Caenorhabditis elegans).